The chain runs to 865 residues: Protein translocase subunit SecA (865 aa).

Residues Q93, 111–115, and D501 contribute to the ATP site; that span reads GEGKT. Zn(2+) contacts are provided by C841, C843, C852, and C853.

Belongs to the SecA family. Monomer and homodimer. Part of the essential Sec protein translocation apparatus which comprises SecA, SecYEG and auxiliary proteins SecDF-YajC and YidC. Requires Zn(2+) as cofactor.

It localises to the cell inner membrane. Its subcellular location is the cytoplasm. It catalyses the reaction ATP + H2O + cellular proteinSide 1 = ADP + phosphate + cellular proteinSide 2.. Its function is as follows. Part of the Sec protein translocase complex. Interacts with the SecYEG preprotein conducting channel. Has a central role in coupling the hydrolysis of ATP to the transfer of proteins into and across the cell membrane, serving as an ATP-driven molecular motor driving the stepwise translocation of polypeptide chains across the membrane. In Helicobacter pylori (strain HPAG1), this protein is Protein translocase subunit SecA.